We begin with the raw amino-acid sequence, 79 residues long: Acyl carrier protein (79 aa).

In terms of domain architecture, Carrier spans 2-77; that stretch reads DNIEQRVKKI…QAIDYARANV (76 aa). An O-(pantetheine 4'-phosphoryl)serine modification is found at Ser-37.

The protein belongs to the acyl carrier protein (ACP) family. Post-translationally, 4'-phosphopantetheine is transferred from CoA to a specific serine of apo-ACP by AcpS. This modification is essential for activity because fatty acids are bound in thioester linkage to the sulfhydryl of the prosthetic group.

The protein resides in the cytoplasm. The protein operates within lipid metabolism; fatty acid biosynthesis. Carrier of the growing fatty acid chain in fatty acid biosynthesis. This chain is Acyl carrier protein, found in Burkholderia cenocepacia (strain HI2424).